A 451-amino-acid polypeptide reads, in one-letter code: Chromosomal replication initiator protein DnaA (451 aa).

The tract at residues 1–94 (MKPDLSSLWQ…KPEPKPAQPS (94 aa)) is domain I, interacts with DnaA modulators. The interval 87–106 (EPKPAQPSALPTHHNKEENK) is disordered. Positions 95-113 (ALPTHHNKEENKPQTVIRS) are domain II. Positions 114–331 (YLNPKHVFEN…GALNRVSANA (218 aa)) are domain III, AAA+ region. 4 residues coordinate ATP: Gly-159, Gly-161, Lys-162, and Thr-163. The domain IV, binds dsDNA stretch occupies residues 332–451 (EFMGAAITID…WSNLIRTLSV (120 aa)).

It belongs to the DnaA family. Oligomerizes as a right-handed, spiral filament on DNA at oriC.

The protein localises to the cytoplasm. Functionally, plays an essential role in the initiation and regulation of chromosomal replication. ATP-DnaA binds to the origin of replication (oriC) to initiate formation of the DNA replication initiation complex once per cell cycle. Binds the DnaA box (a 9 base pair repeat at the origin) and separates the double-stranded (ds)DNA. Forms a right-handed helical filament on oriC DNA; dsDNA binds to the exterior of the filament while single-stranded (ss)DNA is stabiized in the filament's interior. The ATP-DnaA-oriC complex binds and stabilizes one strand of the AT-rich DNA unwinding element (DUE), permitting loading of DNA polymerase. After initiation quickly degrades to an ADP-DnaA complex that is not apt for DNA replication. Binds acidic phospholipids. This is Chromosomal replication initiator protein DnaA from Pasteurella multocida (strain Pm70).